Here is an 85-residue protein sequence, read N- to C-terminus: Putative membrane protein insertion efficiency factor (85 aa).

This sequence belongs to the UPF0161 family.

The protein localises to the cell membrane. Its function is as follows. Could be involved in insertion of integral membrane proteins into the membrane. In terms of biological role, lyses fish blood cells. This Aeromonas hydrophila protein is Putative membrane protein insertion efficiency factor (hlyA).